A 1607-amino-acid polypeptide reads, in one-letter code: Laminin subunit gamma-1 (1607 aa).

Residues 1-33 (MTGGGRAALALQPRGRLWPLLAVLAAVAGCVRA) form the signal peptide. In terms of domain architecture, Laminin N-terminal spans 44 to 283 (RPQRCMPEFV…AISDFAVGGR (240 aa)). N-linked (GlcNAc...) asparagine glycosylation is found at asparagine 58 and asparagine 132. 15 disulfides stabilise this stretch: cysteine 284–cysteine 293, cysteine 286–cysteine 303, cysteine 305–cysteine 314, cysteine 340–cysteine 349, cysteine 342–cysteine 365, cysteine 368–cysteine 377, cysteine 380–cysteine 393, cysteine 396–cysteine 408, cysteine 398–cysteine 414, cysteine 416–cysteine 425, cysteine 428–cysteine 440, cysteine 443–cysteine 454, cysteine 445–cysteine 461, cysteine 463–cysteine 472, and cysteine 475–cysteine 490. Laminin EGF-like domains lie at 284–339 (CKCN…ESLP), 340–395 (CDCN…ACSP), 396–442 (CHCS…GCRP), and 443–492 (CSCD…GCTP). Positions 493-502 (CFCFGHSSVC) constitute a Laminin EGF-like 5; first part domain. The 176-residue stretch at 512 to 687 (DISSTFQIDE…PGVPATWVES (176 aa)) folds into the Laminin IV type A domain. 2 N-linked (GlcNAc...) asparagine glycosylation sites follow: asparagine 574 and asparagine 648. The Laminin EGF-like 5; second part domain occupies 688–721 (CTCPVGYGGQFCETCLPGYRRETPSLGPYSPCVL). 24 disulfides stabilise this stretch: cysteine 722–cysteine 731, cysteine 724–cysteine 738, cysteine 740–cysteine 749, cysteine 752–cysteine 768, cysteine 771–cysteine 779, cysteine 773–cysteine 790, cysteine 793–cysteine 802, cysteine 805–cysteine 823, cysteine 826–cysteine 840, cysteine 828–cysteine 847, cysteine 850–cysteine 859, cysteine 862–cysteine 879, cysteine 882–cysteine 896, cysteine 884–cysteine 903, cysteine 905–cysteine 914, cysteine 917–cysteine 930, cysteine 933–cysteine 945, cysteine 935–cysteine 952, cysteine 954–cysteine 963, cysteine 966–cysteine 978, cysteine 981–cysteine 993, cysteine 983–cysteine 999, cysteine 1001–cysteine 1010, and cysteine 1013–cysteine 1026. Laminin EGF-like domains follow at residues 722-770 (CTCN…DCQP) and 771-825 (CPCP…LCRP). The Laminin EGF-like 8; nidogen-binding domain occupies 826 to 881 (CQCNDNIDPNAVGNCNRLTGECLKCIYNTAGFYCDRCKEGFFGNPLAPNPADKCKA). 3 consecutive Laminin EGF-like domains span residues 882 to 932 (CACN…GCER), 933 to 980 (CDCH…GCKP), and 981 to 1028 (CDCH…GCQE). N-linked (GlcNAc...) asparagine glycosylation is found at asparagine 1020 and asparagine 1105. The tract at residues 1029–1607 (CPACYRLVKD…CFNTPSIEKP (579 aa)) is domain II and I. Residues 1034-1594 (RLVKDKAAEH…HNLEDIKKTL (561 aa)) adopt a coiled-coil conformation. Serine 1147 bears the Phosphoserine mark. 8 N-linked (GlcNAc...) asparagine glycosylation sites follow: asparagine 1159, asparagine 1173, asparagine 1203, asparagine 1221, asparagine 1239, asparagine 1378, asparagine 1393, and asparagine 1437. Serine 1491 carries the phosphoserine modification.

Laminin is a complex glycoprotein, consisting of three different polypeptide chains (alpha, beta, gamma), which are bound to each other by disulfide bonds into a cross-shaped molecule comprising one long and three short arms with globules at each end. Gamma-1 is a subunit of laminin-1 (laminin-111 or EHS laminin), laminin-2 (laminin-211 or merosin), laminin-3 (laminin-121 or S-laminin), laminin-4 (laminin-221 or S-merosin), laminin-6 (laminin-311 or K-laminin), laminin-7 (laminin-321 or KS-laminin), laminin-8 (laminin-411), laminin-9 (laminin-421), laminin-10 (laminin-511) and laminin-11 (laminin-521). Interacts with SVEP1. Found in the basement membranes (major component).

The protein resides in the secreted. The protein localises to the extracellular space. It localises to the extracellular matrix. It is found in the basement membrane. Functionally, binding to cells via a high affinity receptor, laminin is thought to mediate the attachment, migration and organization of cells into tissues during embryonic development by interacting with other extracellular matrix components. In Mus musculus (Mouse), this protein is Laminin subunit gamma-1 (Lamc1).